The following is a 187-amino-acid chain: Epididymal-specific lipocalin-10 (187 aa).

Positions 1 to 19 (MRQGLLVLALVLVLVLVLA) are cleaved as a signal peptide. A disulfide bridge links cysteine 90 with cysteine 163. Asparagine 149 is a glycosylation site (N-linked (GlcNAc...) asparagine). Lysine 170 is subject to N6-acetyllysine.

Belongs to the calycin superfamily. Lipocalin family.

Its subcellular location is the secreted. Functionally, may play a role in male fertility. May act as a retinoid carrier protein within the epididymis. The sequence is that of Epididymal-specific lipocalin-10 (LCN10) from Homo sapiens (Human).